The chain runs to 271 residues: Aquaporin-2 (271 aa).

Over 1 to 11 (MWELRSIAFSR) the chain is Cytoplasmic. The chain crosses the membrane as a helical span at residues 12 to 32 (AVLAEFLATLLFVFFGLGSAL). Residues 33–40 (NWPQALPS) lie on the Extracellular side of the membrane. The chain crosses the membrane as a helical span at residues 41–59 (VLQIAMAFGLAIGTLVQAL). At 60–64 (GHVSG) the chain is on the cytoplasmic side. The discontinuously helical intramembrane region spans 65–74 (AHINPAVTVA). Positions 68–70 (NPA) match the NPA 1 motif. At 75-85 (CLVGCHVSFLR) the chain is on the cytoplasmic side. Residues 86–107 (AVFYVAAQLLGAVAGAALLHEI) traverse the membrane as a helical segment. The Extracellular segment spans residues 108–127 (TPPAIRGDLAVNALNNNSTA). N-linked (GlcNAc...) asparagine glycans are attached at residues Asn123 and Asn124. Residues 128 to 148 (GQAVTVELFLTLQLVLCIFPS) form a helical membrane-spanning segment. Residues 149-156 (TDKRRGKQ) are Cytoplasmic-facing. The helical transmembrane segment at 157-176 (LGHPALSIGFSVALGHLLGI) threads the bilayer. At 177–180 (HYTG) the chain is on the extracellular side. The segment at residues 181-193 (CSMNPARSLAPAI) is an intramembrane region (discontinuously helical). An NPA 2 motif is present at residues 184 to 186 (NPA). Residues 194–201 (VTGKFDDH) lie on the Extracellular side of the membrane. The helical transmembrane segment at 202–222 (WVFWIGPLVGAIVASLLYNYV) threads the bilayer. The Cytoplasmic segment spans residues 223–271 (LFPPAKSLSERLAVLKGLEPDTDWEEREVRRRQSVELHSPQSLPRGTKA). Positions 249-271 (REVRRRQSVELHSPQSLPRGTKA) are disordered. Position 256 is a phosphoserine (Ser256). Residues 261 to 271 (SPQSLPRGTKA) are compositionally biased toward polar residues.

Belongs to the MIP/aquaporin (TC 1.A.8) family. Homotetramer. In terms of processing, ser-256 phosphorylation is necessary and sufficient for expression at the apical membrane. Endocytosis is not phosphorylation-dependent. Post-translationally, N-glycosylated. In terms of tissue distribution, expressed in renal collecting tubules.

It localises to the apical cell membrane. It is found in the basolateral cell membrane. The protein resides in the cell membrane. Its subcellular location is the cytoplasmic vesicle membrane. The protein localises to the golgi apparatus. It localises to the trans-Golgi network membrane. The enzyme catalyses H2O(in) = H2O(out). The catalysed reaction is glycerol(in) = glycerol(out). Its function is as follows. Forms a water-specific channel that provides the plasma membranes of renal collecting duct with high permeability to water, thereby permitting water to move in the direction of an osmotic gradient. Could also be permeable to glycerol. The sequence is that of Aquaporin-2 from Ovis aries (Sheep).